A 497-amino-acid polypeptide reads, in one-letter code: Guanosine-5'-triphosphate,3'-diphosphate pyrophosphatase (497 aa).

Belongs to the GppA/Ppx family. GppA subfamily.

It carries out the reaction guanosine 3'-diphosphate 5'-triphosphate + H2O = guanosine 3',5'-bis(diphosphate) + phosphate + H(+). It participates in purine metabolism; ppGpp biosynthesis; ppGpp from GTP: step 2/2. Its function is as follows. Catalyzes the conversion of pppGpp to ppGpp. Guanosine pentaphosphate (pppGpp) is a cytoplasmic signaling molecule which together with ppGpp controls the 'stringent response', an adaptive process that allows bacteria to respond to amino acid starvation, resulting in the coordinated regulation of numerous cellular activities. The chain is Guanosine-5'-triphosphate,3'-diphosphate pyrophosphatase from Vibrio atlanticus (strain LGP32) (Vibrio splendidus (strain Mel32)).